The primary structure comprises 245 residues: 2,3-bisphosphoglycerate-dependent phosphoglycerate mutase (245 aa).

Substrate is bound by residues 9–16 (RHGESEWN), 22–23 (TG), arginine 61, 88–91 (ERHY), lysine 99, 115–116 (RR), and 181–182 (GN). The Tele-phosphohistidine intermediate role is filled by histidine 10. Glutamate 88 functions as the Proton donor/acceptor in the catalytic mechanism.

The protein belongs to the phosphoglycerate mutase family. BPG-dependent PGAM subfamily.

It catalyses the reaction (2R)-2-phosphoglycerate = (2R)-3-phosphoglycerate. It participates in carbohydrate degradation; glycolysis; pyruvate from D-glyceraldehyde 3-phosphate: step 3/5. In terms of biological role, catalyzes the interconversion of 2-phosphoglycerate and 3-phosphoglycerate. The chain is 2,3-bisphosphoglycerate-dependent phosphoglycerate mutase from Nocardia farcinica (strain IFM 10152).